Consider the following 356-residue polypeptide: Peptide chain release factor 1 (356 aa).

Gln-233 carries the N5-methylglutamine modification.

The protein belongs to the prokaryotic/mitochondrial release factor family. Methylated by PrmC. Methylation increases the termination efficiency of RF1.

The protein resides in the cytoplasm. Functionally, peptide chain release factor 1 directs the termination of translation in response to the peptide chain termination codons UAG and UAA. This is Peptide chain release factor 1 (prfA) from Bacillus subtilis (strain 168).